A 317-amino-acid chain; its full sequence is N-acetyl-gamma-glutamyl-phosphate reductase (317 aa).

Residue C136 is part of the active site.

The protein belongs to the NAGSA dehydrogenase family. Type 1 subfamily.

The protein localises to the cytoplasm. It carries out the reaction N-acetyl-L-glutamate 5-semialdehyde + phosphate + NADP(+) = N-acetyl-L-glutamyl 5-phosphate + NADPH + H(+). It functions in the pathway amino-acid biosynthesis; L-arginine biosynthesis; N(2)-acetyl-L-ornithine from L-glutamate: step 3/4. Its function is as follows. Catalyzes the NADPH-dependent reduction of N-acetyl-5-glutamyl phosphate to yield N-acetyl-L-glutamate 5-semialdehyde. The protein is N-acetyl-gamma-glutamyl-phosphate reductase of Stenotrophomonas maltophilia (strain R551-3).